The primary structure comprises 918 residues: Leucine--tRNA ligase (918 aa).

Residues 40–51 carry the 'HIGH' region motif; that stretch reads PYPSGVGLHVGH. The 'KMSKS' region motif lies at 692-696; sequence KMSKS. K695 provides a ligand contact to ATP.

This sequence belongs to the class-I aminoacyl-tRNA synthetase family.

The protein resides in the cytoplasm. It catalyses the reaction tRNA(Leu) + L-leucine + ATP = L-leucyl-tRNA(Leu) + AMP + diphosphate. The polypeptide is Leucine--tRNA ligase (Azobacteroides pseudotrichonymphae genomovar. CFP2).